Reading from the N-terminus, the 287-residue chain is Nucleotide-binding protein Pmob_0154 (287 aa).

15 to 22 (GLSGAGKT) contributes to the ATP binding site. Residue 64–67 (DIRW) coordinates GTP.

It belongs to the RapZ-like family.

Functionally, displays ATPase and GTPase activities. This is Nucleotide-binding protein Pmob_0154 from Petrotoga mobilis (strain DSM 10674 / SJ95).